The sequence spans 769 residues: Glutathione biosynthesis bifunctional protein GshAB (769 aa).

The interval 1 to 347 is glutamate--cysteine ligase; the sequence is MLDSFKEDPK…QLADENENNI (347 aa). Positions 514–768 constitute an ATP-grasp domain; that stretch reads KLVLAEHDIR…IGDKILDFLF (255 aa). Position 541–599 (541–599) interacts with ATP; it reads SLFEDKQIVVKPKSTNYGWGISIFKNKFTLEDYQEALNIAFSYDSSVIIEEFIPGDEFR. Mg(2+) is bound by residues D721, E738, and N740. D721, E738, and N740 together coordinate Mn(2+).

This sequence in the N-terminal section; belongs to the glutamate--cysteine ligase type 1 family. Type 2 subfamily. In terms of assembly, monomer. Requires Mg(2+) as cofactor. The cofactor is Mn(2+).

The enzyme catalyses L-cysteine + L-glutamate + ATP = gamma-L-glutamyl-L-cysteine + ADP + phosphate + H(+). It catalyses the reaction gamma-L-glutamyl-L-cysteine + glycine + ATP = glutathione + ADP + phosphate + H(+). Its pathway is sulfur metabolism; glutathione biosynthesis; glutathione from L-cysteine and L-glutamate: step 1/2. It participates in sulfur metabolism; glutathione biosynthesis; glutathione from L-cysteine and L-glutamate: step 2/2. Its function is as follows. Synthesizes glutathione from L-glutamate and L-cysteine via gamma-L-glutamyl-L-cysteine. This Listeria monocytogenes serotype 4b (strain F2365) protein is Glutathione biosynthesis bifunctional protein GshAB.